The following is a 649-amino-acid chain: 1-deoxy-D-xylulose-5-phosphate synthase (649 aa).

Thiamine diphosphate contacts are provided by residues His84 and 125-127 (GHS). Position 156 (Asp156) interacts with Mg(2+). Thiamine diphosphate is bound by residues 157–158 (GS), Asn185, Phe292, and Glu385. A Mg(2+)-binding site is contributed by Asn185.

The protein belongs to the transketolase family. DXPS subfamily. In terms of assembly, homodimer. The cofactor is Mg(2+). Thiamine diphosphate serves as cofactor.

It carries out the reaction D-glyceraldehyde 3-phosphate + pyruvate + H(+) = 1-deoxy-D-xylulose 5-phosphate + CO2. It participates in metabolic intermediate biosynthesis; 1-deoxy-D-xylulose 5-phosphate biosynthesis; 1-deoxy-D-xylulose 5-phosphate from D-glyceraldehyde 3-phosphate and pyruvate: step 1/1. Its function is as follows. Catalyzes the acyloin condensation reaction between C atoms 2 and 3 of pyruvate and glyceraldehyde 3-phosphate to yield 1-deoxy-D-xylulose-5-phosphate (DXP). The chain is 1-deoxy-D-xylulose-5-phosphate synthase from Saccharophagus degradans (strain 2-40 / ATCC 43961 / DSM 17024).